Reading from the N-terminus, the 166-residue chain is Nucleotide-binding protein Dred_1927 (166 aa).

Belongs to the YajQ family.

In terms of biological role, nucleotide-binding protein. In Desulforamulus reducens (strain ATCC BAA-1160 / DSM 100696 / MI-1) (Desulfotomaculum reducens), this protein is Nucleotide-binding protein Dred_1927.